Consider the following 335-residue polypeptide: Ketol-acid reductoisomerase (NADP(+)) (335 aa).

The KARI N-terminal Rossmann domain maps to 1-182 (MATIIYDDET…GATRAGVYET (182 aa)). NADP(+)-binding positions include 25-28 (YGSQ), Arg48, Ser51, Ser53, and 83-86 (DEKQ). His108 is a catalytic residue. Residue Gly134 participates in NADP(+) binding. One can recognise a KARI C-terminal knotted domain in the interval 183–328 (TFREETETDL…KQIRANIPWL (146 aa)). The Mg(2+) site is built by Asp191, Glu195, Glu227, and Glu231. Residue Ser252 coordinates substrate.

It belongs to the ketol-acid reductoisomerase family. It depends on Mg(2+) as a cofactor.

The catalysed reaction is (2R)-2,3-dihydroxy-3-methylbutanoate + NADP(+) = (2S)-2-acetolactate + NADPH + H(+). It carries out the reaction (2R,3R)-2,3-dihydroxy-3-methylpentanoate + NADP(+) = (S)-2-ethyl-2-hydroxy-3-oxobutanoate + NADPH + H(+). Its pathway is amino-acid biosynthesis; L-isoleucine biosynthesis; L-isoleucine from 2-oxobutanoate: step 2/4. The protein operates within amino-acid biosynthesis; L-valine biosynthesis; L-valine from pyruvate: step 2/4. In terms of biological role, involved in the biosynthesis of branched-chain amino acids (BCAA). Catalyzes an alkyl-migration followed by a ketol-acid reduction of (S)-2-acetolactate (S2AL) to yield (R)-2,3-dihydroxy-isovalerate. In the isomerase reaction, S2AL is rearranged via a Mg-dependent methyl migration to produce 3-hydroxy-3-methyl-2-ketobutyrate (HMKB). In the reductase reaction, this 2-ketoacid undergoes a metal-dependent reduction by NADPH to yield (R)-2,3-dihydroxy-isovalerate. This is Ketol-acid reductoisomerase (NADP(+)) from Methanosarcina mazei (strain ATCC BAA-159 / DSM 3647 / Goe1 / Go1 / JCM 11833 / OCM 88) (Methanosarcina frisia).